The sequence spans 378 residues: Erythronate-4-phosphate dehydrogenase (378 aa).

Residues Ser45 and Thr66 each coordinate substrate. Residues Asp146 and Thr175 each coordinate NAD(+). Arg208 is a catalytic residue. An NAD(+)-binding site is contributed by Asp232. Glu237 is an active-site residue. Catalysis depends on His254, which acts as the Proton donor. NAD(+) is bound at residue Gly257. Tyr258 contacts substrate.

It belongs to the D-isomer specific 2-hydroxyacid dehydrogenase family. PdxB subfamily. Homodimer.

It is found in the cytoplasm. It catalyses the reaction 4-phospho-D-erythronate + NAD(+) = (R)-3-hydroxy-2-oxo-4-phosphooxybutanoate + NADH + H(+). The protein operates within cofactor biosynthesis; pyridoxine 5'-phosphate biosynthesis; pyridoxine 5'-phosphate from D-erythrose 4-phosphate: step 2/5. Functionally, catalyzes the oxidation of erythronate-4-phosphate to 3-hydroxy-2-oxo-4-phosphonooxybutanoate. The sequence is that of Erythronate-4-phosphate dehydrogenase from Escherichia coli (strain ATCC 8739 / DSM 1576 / NBRC 3972 / NCIMB 8545 / WDCM 00012 / Crooks).